The sequence spans 406 residues: Phosphopentomutase (406 aa).

Residues D10, D305, H310, D346, H347, and H358 each coordinate Mn(2+).

The protein belongs to the phosphopentomutase family. It depends on Mn(2+) as a cofactor.

It is found in the cytoplasm. It catalyses the reaction 2-deoxy-alpha-D-ribose 1-phosphate = 2-deoxy-D-ribose 5-phosphate. The catalysed reaction is alpha-D-ribose 1-phosphate = D-ribose 5-phosphate. It functions in the pathway carbohydrate degradation; 2-deoxy-D-ribose 1-phosphate degradation; D-glyceraldehyde 3-phosphate and acetaldehyde from 2-deoxy-alpha-D-ribose 1-phosphate: step 1/2. Isomerase that catalyzes the conversion of deoxy-ribose 1-phosphate (dRib-1-P) and ribose 1-phosphate (Rib-1-P) to deoxy-ribose 5-phosphate (dRib-5-P) and ribose 5-phosphate (Rib-5-P), respectively. This chain is Phosphopentomutase, found in Rhizobium meliloti (strain 1021) (Ensifer meliloti).